The sequence spans 247 residues: 5-oxoprolinase subunit A (247 aa).

It belongs to the LamB/PxpA family. Forms a complex composed of PxpA, PxpB and PxpC.

It catalyses the reaction 5-oxo-L-proline + ATP + 2 H2O = L-glutamate + ADP + phosphate + H(+). In terms of biological role, catalyzes the cleavage of 5-oxoproline to form L-glutamate coupled to the hydrolysis of ATP to ADP and inorganic phosphate. The chain is 5-oxoprolinase subunit A from Histophilus somni (strain 129Pt) (Haemophilus somnus).